A 245-amino-acid chain; its full sequence is MVLNSNLTTQDKQRIINPIERTNVTQDLSENVILTTVDDLYDWARLSSLWPLLFGTACCFIEFAALIGSRFDFDRFGLIPRSSPRQADLIITAGTITMKMAPQLVRLYEQMPEPKYVIAMGACTITGGMFSVDSPTAVRGVDKLIPVDVYLPGCPPRPEAIIDAIIKLRKKISNESIQERDKIKQTHRYYSTTHNLKPVEEILTGKYLQSDTRSAPPKELAEAIGMPIPPALLTEKAQKEEQTRG.

4 residues coordinate [4Fe-4S] cluster: cysteine 58, cysteine 59, cysteine 123, and cysteine 154. The interval 210–245 is disordered; it reads SDTRSAPPKELAEAIGMPIPPALLTEKAQKEEQTRG. Residues 236–245 show a composition bias toward basic and acidic residues; sequence KAQKEEQTRG.

Belongs to the complex I 20 kDa subunit family. As to quaternary structure, NDH-1 can be composed of about 15 different subunits; different subcomplexes with different compositions have been identified which probably have different functions. It depends on [4Fe-4S] cluster as a cofactor.

It is found in the cellular thylakoid membrane. The enzyme catalyses a plastoquinone + NADH + (n+1) H(+)(in) = a plastoquinol + NAD(+) + n H(+)(out). The catalysed reaction is a plastoquinone + NADPH + (n+1) H(+)(in) = a plastoquinol + NADP(+) + n H(+)(out). In terms of biological role, NDH-1 shuttles electrons from an unknown electron donor, via FMN and iron-sulfur (Fe-S) centers, to quinones in the respiratory and/or the photosynthetic chain. The immediate electron acceptor for the enzyme in this species is believed to be plastoquinone. Couples the redox reaction to proton translocation, and thus conserves the redox energy in a proton gradient. Cyanobacterial NDH-1 also plays a role in inorganic carbon-concentration. The polypeptide is NAD(P)H-quinone oxidoreductase subunit K (Nostoc punctiforme (strain ATCC 29133 / PCC 73102)).